A 985-amino-acid polypeptide reads, in one-letter code: Ephrin type-A receptor 4-B (985 aa).

Residues 1 to 20 form the signal peptide; it reads MAGIVHGILFCGLFGLCWAV. Residues 21–547 are Extracellular-facing; it reads TGSRIYPASE…MIGEGTSPTV (527 aa). In terms of domain architecture, Eph LBD spans 30–209; the sequence is EVTLLDSRSV…FYKKCPLTVR (180 aa). Fibronectin type-III domains are found at residues 328–438 and 439–536; these read PPSA…TNQA and APST…TVPS. Residues Asn-340 and Asn-407 are each glycosylated (N-linked (GlcNAc...) asparagine). The chain crosses the membrane as a helical span at residues 548–569; sequence LLVSVAGSIVLVVILIAAFVIS. The Cytoplasmic segment spans residues 570 to 985; sequence RRRSKYSKAK…QQMQGRMVPV (416 aa). Phosphotyrosine; by autocatalysis occurs at positions 595 and 601. A Protein kinase domain is found at 620–881; the sequence is IKIEKVIGVG…QIVSMLDKLI (262 aa). ATP is bound by residues 626-634 and Lys-652; that span reads IGVGEFGEV. Catalysis depends on Asp-745, which acts as the Proton acceptor. Phosphotyrosine; by autocatalysis is present on residues Tyr-778 and Tyr-927. The 65-residue stretch at 910–974 folds into the SAM domain; it reads SQVASVLDWL…LSSVQGMRTQ (65 aa). The PDZ-binding signature appears at 983 to 985; that stretch reads VPV.

It belongs to the protein kinase superfamily. Tyr protein kinase family. Ephrin receptor subfamily. As to expression, localized expression in a subset of neural crest and neural tissues in embryos.

The protein resides in the cell membrane. Its subcellular location is the early endosome. It carries out the reaction L-tyrosyl-[protein] + ATP = O-phospho-L-tyrosyl-[protein] + ADP + H(+). Receptor tyrosine kinase which binds membrane-bound ephrin family ligands residing on adjacent cells, leading to contact-dependent bidirectional signaling into neighboring cells. The signaling pathway downstream of the receptor is referred to as forward signaling while the signaling pathway downstream of the ephrin ligand is referred to as reverse signaling. Highly promiscuous, it has the unique property among Eph receptors to bind and to be physiologically activated by both GPI-anchored ephrin-A and transmembrane ephrin-B ligands including EFNA1 and EFNB3. Upon activation by ephrin ligands, modulates cell morphology and integrin-dependent cell adhesion through regulation of the Rac, Rap and Rho GTPases activity. Plays an important role in the development of the nervous system controlling different steps of axonal guidance including the establishment of the corticospinal projections. This is Ephrin type-A receptor 4-B (epha4-b) from Xenopus laevis (African clawed frog).